Here is an 81-residue protein sequence, read N- to C-terminus: MNPVISAASVIAAGLAVGLASIGPGIGQGTAAGQAVEGIARQPEAEGKIRGTLLLSLAFMEALTIYGLVVALALLFANPFV.

2 helical membrane-spanning segments follow: residues Ala7–Gly27 and Leu57–Ala77.

This sequence belongs to the ATPase C chain family. In terms of assembly, F-type ATPases have 2 components, F(1) - the catalytic core - and F(0) - the membrane proton channel. F(1) has five subunits: alpha(3), beta(3), gamma(1), delta(1), epsilon(1). F(0) has four main subunits: a(1), b(1), b'(1) and c(10-14). The alpha and beta chains form an alternating ring which encloses part of the gamma chain. F(1) is attached to F(0) by a central stalk formed by the gamma and epsilon chains, while a peripheral stalk is formed by the delta, b and b' chains.

It localises to the plastid. The protein resides in the chloroplast thylakoid membrane. Its function is as follows. F(1)F(0) ATP synthase produces ATP from ADP in the presence of a proton or sodium gradient. F-type ATPases consist of two structural domains, F(1) containing the extramembraneous catalytic core and F(0) containing the membrane proton channel, linked together by a central stalk and a peripheral stalk. During catalysis, ATP synthesis in the catalytic domain of F(1) is coupled via a rotary mechanism of the central stalk subunits to proton translocation. In terms of biological role, key component of the F(0) channel; it plays a direct role in translocation across the membrane. A homomeric c-ring of between 10-14 subunits forms the central stalk rotor element with the F(1) delta and epsilon subunits. In Staurastrum punctulatum (Green alga), this protein is ATP synthase subunit c, chloroplastic.